The primary structure comprises 452 residues: Methionine aminopeptidase 2-1 (452 aa).

Residues Met-1–Asp-100 form a disordered region. A compositionally biased stretch (acidic residues) spans Glu-37 to Ala-51. Residues Lys-60 to Ala-73 show a composition bias toward basic residues. His-205 provides a ligand contact to substrate. 3 residues coordinate a divalent metal cation: Asp-225, Asp-236, and His-305. A substrate-binding site is contributed by His-313. 2 residues coordinate a divalent metal cation: Glu-338 and Glu-433.

Belongs to the peptidase M24A family. Methionine aminopeptidase eukaryotic type 2 subfamily. It depends on Co(2+) as a cofactor. Requires Zn(2+) as cofactor. Mn(2+) serves as cofactor. Fe(2+) is required as a cofactor.

It is found in the cytoplasm. It carries out the reaction Release of N-terminal amino acids, preferentially methionine, from peptides and arylamides.. In terms of biological role, cotranslationally removes the N-terminal methionine from nascent proteins. The N-terminal methionine is often cleaved when the second residue in the primary sequence is small and uncharged (Met-Ala-, Cys, Gly, Pro, Ser, Thr, or Val). This chain is Methionine aminopeptidase 2-1, found in Pyrenophora teres f. teres (strain 0-1) (Barley net blotch fungus).